Consider the following 1289-residue polypeptide: Pesticidal crystal protein Cry5Ab (1289 aa).

The interval 1263–1289 is disordered; the sequence is PLPTDDQNSEGNTASSTNSDTSMNNNQ. The span at 1274-1289 shows a compositional bias: low complexity; sequence NTASSTNSDTSMNNNQ.

The protein belongs to the delta endotoxin family.

Functionally, endotoxin with nematicidal activity. The chain is Pesticidal crystal protein Cry5Ab (cry5Ab) from Bacillus thuringiensis subsp. darmstadiensis.